A 313-amino-acid chain; its full sequence is tRNA pseudouridine synthase B (313 aa).

The active-site Nucleophile is the D48.

This sequence belongs to the pseudouridine synthase TruB family. Type 1 subfamily.

It catalyses the reaction uridine(55) in tRNA = pseudouridine(55) in tRNA. Its function is as follows. Responsible for synthesis of pseudouridine from uracil-55 in the psi GC loop of transfer RNAs. The protein is tRNA pseudouridine synthase B of Saccharophagus degradans (strain 2-40 / ATCC 43961 / DSM 17024).